An 834-amino-acid chain; its full sequence is MSNVPSPTVTLEGDSPDAAHEAVSSSSSSFVPVEIQDAIQIIDEHKQFNKQILDYISSRSRQPGDYRIISVFGSQSTGKSTLLNHLFSTNFDVMDEVNRQQTTKGIWMAVSPGVSNSLPANAHVPPENILVMDVEGTDGRERGEDQDFERKAALFALSTSEVLIVNMWESQVGLYQGANMGLLKTVFEVNLSLFGKAKLQNNDHKVLLLFVIRDHLGVTPMESLAATITQDLLRIWEGLNKPADVAHLAFDDFFDLAFHTLSHKVLQNEKFLDDVRSLGNKFLDTSSESFLFKPNYHHDIPIEGWTMYAENCWDQIDHNKDLDLPTQQILVAKFKCDEVAAQCFEEFAKVSHELKNVAVSATQSTEPIDYKDTGLGFQDMKQSVLEDYDLGASKYNKSVYQQKRATLAEKIDSTLQDVFAIYAKHLVTTSLKAVSAGLSRKTRSGTFVEAMEKLKQSSAHDFSQALALISLDGALDTRPFEKEYLAELEQLVSKQQIVELNSILSKALKKLNNGLSTCFVEELANPSELTWDHILEKFRGLSKSALQKYETEEGDYDFRLGTLPSMNKRALKTFDFKSWELLDNLIHKYISKDNLLNILKDRFDDKFRYDENGVPRLYQNTKELEGSFSESKTHALKAFPILTVARLSDGTEVIPKYDVRDKKLKRQYETVREEKEAEEEDEDEWDSEDDENQRAFAELLSESEKAEVMAKFKREMDAKFVETKRSIMQHVTQIPYYIYIVILVLGWNEFMAILRNPFFFTLLIMLAGATYVMYSMNLLGPASIVVQRMANEALGLAKEKLREFVVDDHMQHGHNMKKMTTNDIELDDLSEEST.

The segment at 1-26 (MSNVPSPTVTLEGDSPDAAHEAVSSS) is disordered. Residues 1-733 (MSNVPSPTVT…KRSIMQHVTQ (733 aa)) are Cytoplasmic-facing. A GB1/RHD3-type G domain is found at 63–296 (PGDYRIISVF…SESFLFKPNY (234 aa)). 73-80 (GSQSTGKS) provides a ligand contact to GTP. The stretch at 659 to 688 (VRDKKLKRQYETVREEKEAEEEDEDEWDSE) forms a coiled coil. Residues 670–689 (TVREEKEAEEEDEDEWDSED) form a disordered region. Over residues 676–689 (EAEEEDEDEWDSED) the composition is skewed to acidic residues. A helical membrane pass occupies residues 734–754 (IPYYIYIVILVLGWNEFMAIL). The Lumenal portion of the chain corresponds to 755–757 (RNP). Residues 758–778 (FFFTLLIMLAGATYVMYSMNL) form a helical membrane-spanning segment. Topologically, residues 779–834 (LGPASIVVQRMANEALGLAKEKLREFVVDDHMQHGHNMKKMTTNDIELDDLSEEST) are cytoplasmic.

Belongs to the TRAFAC class dynamin-like GTPase superfamily. GB1/RHD3 GTPase family. RHD3 subfamily.

The protein resides in the endoplasmic reticulum membrane. Functionally, cooperates with the reticulon proteins and tubule-shaping DP1 family proteins to generate and maintain the structure of the tubular endoplasmic reticulum network. Has GTPase activity, which is required for its function in ER organization. The sequence is that of Protein SEY1 from Clavispora lusitaniae (strain ATCC 42720) (Yeast).